The sequence spans 340 residues: Solute carrier family 35 member G3 (340 aa).

The disordered stretch occupies residues proline 11–asparagine 31. The next 9 membrane-spanning stretches (helical) occupy residues threonine 39–phenylalanine 59, leucine 69–leucine 89, phenylalanine 107–valine 127, alanine 160–glycine 180, leucine 189–leucine 209, threonine 223–leucine 243, cysteine 257–threonine 277, leucine 283–leucine 303, and valine 307–alanine 327. The EamA 1 domain maps to leucine 51–glycine 176. The EamA 2 domain occupies threonine 223 to alanine 327.

It belongs to the SLC35G solute transporter family.

The protein resides in the membrane. The protein is Solute carrier family 35 member G3 (Slc35g3) of Rattus norvegicus (Rat).